A 406-amino-acid chain; its full sequence is Arginine deiminase (406 aa).

Catalysis depends on C396, which acts as the Amidino-cysteine intermediate.

Belongs to the arginine deiminase family.

The protein localises to the cytoplasm. It catalyses the reaction L-arginine + H2O = L-citrulline + NH4(+). Its pathway is amino-acid degradation; L-arginine degradation via ADI pathway; carbamoyl phosphate from L-arginine: step 1/2. This is Arginine deiminase from Aliivibrio fischeri (strain MJ11) (Vibrio fischeri).